Consider the following 397-residue polypeptide: Serpin B10 (397 aa).

The short motif at 74–77 (KKRK) is the Nuclear localization signal element.

It belongs to the serpin family. Ov-serpin subfamily.

It is found in the nucleus. It localises to the cytoplasm. Functionally, protease inhibitor that may play a role in the regulation of protease activities during hematopoiesis and apoptosis induced by TNF. May regulate protease activities in the cytoplasm and in the nucleus. This is Serpin B10 (SERPINB10) from Otolemur garnettii (Small-eared galago).